The primary structure comprises 464 residues: Cysteine--tRNA ligase (464 aa).

Cys-28 contacts Zn(2+). The short motif at 30–40 (VTVYDFCHIGH) is the 'HIGH' region element. Residues Cys-209, His-234, and Glu-238 each contribute to the Zn(2+) site. Positions 266–270 (KMSKS) match the 'KMSKS' region motif. Lys-269 is a binding site for ATP.

It belongs to the class-I aminoacyl-tRNA synthetase family. In terms of assembly, monomer. The cofactor is Zn(2+).

The protein resides in the cytoplasm. It carries out the reaction tRNA(Cys) + L-cysteine + ATP = L-cysteinyl-tRNA(Cys) + AMP + diphosphate. The chain is Cysteine--tRNA ligase (cysS) from Buchnera aphidicola subsp. Acyrthosiphon pisum (strain APS) (Acyrthosiphon pisum symbiotic bacterium).